The sequence spans 217 residues: PTB-containing, cubilin and LRP1-interacting protein (217 aa).

The PID domain occupies 60–217; sequence VTYLGKVSTT…ASQELESDDG (158 aa). A disordered region spans residues 194–217; the sequence is KSDGRIHRSSSSEEASQELESDDG. Ser-202, Ser-203, and Ser-214 each carry phosphoserine. Residues 208–217 show a composition bias toward acidic residues; the sequence is ASQELESDDG.

As to quaternary structure, found in a complex with PID1/PCLI1, LRP1 and CUBNI. Interacts with LRP1 and CUBN.

The protein localises to the cytoplasm. Functionally, increases proliferation of preadipocytes without affecting adipocytic differentiation. The polypeptide is PTB-containing, cubilin and LRP1-interacting protein (Pid1) (Mus musculus (Mouse)).